We begin with the raw amino-acid sequence, 1590 residues long: Pentafunctional AROM polypeptide (1590 aa).

Residues 1 to 400 (MSTANGSSPT…HEPKASSVDD (400 aa)) are 3-dehydroquinate synthase. NAD(+) is bound by residues 49 to 51 (DTN), 96 to 99 (EGSK), 127 to 129 (GGV), and Asp132. Arg143 contacts 7-phospho-2-dehydro-3-deoxy-D-arabino-heptonate. 152–153 (TT) is a binding site for NAD(+). 7-phospho-2-dehydro-3-deoxy-D-arabino-heptonate contacts are provided by Asp159 and Lys165. Lys174 lines the NAD(+) pocket. Asn175 serves as a coordination point for 7-phospho-2-dehydro-3-deoxy-D-arabino-heptonate. Residues 192–195 (FLNT) and Asn203 contribute to the NAD(+) site. Glu207 contacts Zn(2+). 7-phospho-2-dehydro-3-deoxy-D-arabino-heptonate is bound by residues 207-210 (EVIK) and Lys266. Glu276 (proton acceptor; for 3-dehydroquinate synthase activity) is an active-site residue. 7-phospho-2-dehydro-3-deoxy-D-arabino-heptonate-binding positions include 280 to 284 (RNLLN) and His287. Residue His287 coordinates Zn(2+). His291 functions as the Proton acceptor; for 3-dehydroquinate synthase activity in the catalytic mechanism. 7-phospho-2-dehydro-3-deoxy-D-arabino-heptonate-binding residues include His303 and Lys372. His303 is a binding site for Zn(2+). The tract at residues 413–856 (VQPGVRPGLK…WDVLSGVFGV (444 aa)) is EPSP synthase. The active-site For EPSP synthase activity is Cys838. The shikimate kinase stretch occupies residues 876–1070 (NRSVFVIGMR…KAKPHSFFVS (195 aa)). An ATP-binding site is contributed by 883-890 (GMRGAGKS). Residues 1071–1285 (LTVPNITAHT…AAPGQLTAAE (215 aa)) form a 3-dehydroquinase region. His1187 acts as the Proton acceptor; for 3-dehydroquinate dehydratase activity in catalysis. Lys1215 serves as the catalytic Schiff-base intermediate with substrate; for 3-dehydroquinate dehydratase activity. The interval 1298 to 1590 (KRKFYLFGKP…IVMNGTSDSS (293 aa)) is shikimate dehydrogenase.

This sequence in the N-terminal section; belongs to the sugar phosphate cyclases superfamily. Dehydroquinate synthase family. It in the 2nd section; belongs to the EPSP synthase family. The protein in the 3rd section; belongs to the shikimate kinase family. In the 4th section; belongs to the type-I 3-dehydroquinase family. This sequence in the C-terminal section; belongs to the shikimate dehydrogenase family. Homodimer. The cofactor is Zn(2+).

The protein localises to the cytoplasm. The enzyme catalyses 7-phospho-2-dehydro-3-deoxy-D-arabino-heptonate = 3-dehydroquinate + phosphate. It carries out the reaction 3-dehydroquinate = 3-dehydroshikimate + H2O. The catalysed reaction is shikimate + NADP(+) = 3-dehydroshikimate + NADPH + H(+). It catalyses the reaction shikimate + ATP = 3-phosphoshikimate + ADP + H(+). The enzyme catalyses 3-phosphoshikimate + phosphoenolpyruvate = 5-O-(1-carboxyvinyl)-3-phosphoshikimate + phosphate. The protein operates within metabolic intermediate biosynthesis; chorismate biosynthesis; chorismate from D-erythrose 4-phosphate and phosphoenolpyruvate: step 2/7. It functions in the pathway metabolic intermediate biosynthesis; chorismate biosynthesis; chorismate from D-erythrose 4-phosphate and phosphoenolpyruvate: step 3/7. It participates in metabolic intermediate biosynthesis; chorismate biosynthesis; chorismate from D-erythrose 4-phosphate and phosphoenolpyruvate: step 4/7. Its pathway is metabolic intermediate biosynthesis; chorismate biosynthesis; chorismate from D-erythrose 4-phosphate and phosphoenolpyruvate: step 5/7. The protein operates within metabolic intermediate biosynthesis; chorismate biosynthesis; chorismate from D-erythrose 4-phosphate and phosphoenolpyruvate: step 6/7. The AROM polypeptide catalyzes 5 consecutive enzymatic reactions in prechorismate polyaromatic amino acid biosynthesis. In Pyricularia oryzae (strain 70-15 / ATCC MYA-4617 / FGSC 8958) (Rice blast fungus), this protein is Pentafunctional AROM polypeptide.